A 48-amino-acid polypeptide reads, in one-letter code: Keratin-associated protein 22-1 (48 aa).

As to quaternary structure, interacts with hair keratins.

In terms of biological role, in the hair cortex, hair keratin intermediate filaments are embedded in an interfilamentous matrix, consisting of hair keratin-associated proteins (KRTAP), which are essential for the formation of a rigid and resistant hair shaft through their extensive disulfide bond cross-linking with abundant cysteine residues of hair keratins. The matrix proteins include the high-sulfur and high-glycine-tyrosine keratins. The protein is Keratin-associated protein 22-1 (KRTAP22-1) of Homo sapiens (Human).